The primary structure comprises 468 residues: ATP synthase subunit beta (468 aa).

155 to 162 (GGAGVGKT) provides a ligand contact to ATP.

This sequence belongs to the ATPase alpha/beta chains family. In terms of assembly, F-type ATPases have 2 components, CF(1) - the catalytic core - and CF(0) - the membrane proton channel. CF(1) has five subunits: alpha(3), beta(3), gamma(1), delta(1), epsilon(1). CF(0) has three main subunits: a(1), b(2) and c(9-12). The alpha and beta chains form an alternating ring which encloses part of the gamma chain. CF(1) is attached to CF(0) by a central stalk formed by the gamma and epsilon chains, while a peripheral stalk is formed by the delta and b chains.

The protein resides in the cell membrane. It catalyses the reaction ATP + H2O + 4 H(+)(in) = ADP + phosphate + 5 H(+)(out). Produces ATP from ADP in the presence of a proton gradient across the membrane. The catalytic sites are hosted primarily by the beta subunits. This chain is ATP synthase subunit beta, found in Streptococcus pyogenes serotype M49 (strain NZ131).